The chain runs to 159 residues: Ribosomal RNA large subunit methyltransferase H (159 aa).

Residues leucine 76, glycine 108, and 127-132 each bind S-adenosyl-L-methionine; that span reads FSKMTF.

It belongs to the RNA methyltransferase RlmH family. Homodimer.

The protein localises to the cytoplasm. It carries out the reaction pseudouridine(1915) in 23S rRNA + S-adenosyl-L-methionine = N(3)-methylpseudouridine(1915) in 23S rRNA + S-adenosyl-L-homocysteine + H(+). Its function is as follows. Specifically methylates the pseudouridine at position 1915 (m3Psi1915) in 23S rRNA. The chain is Ribosomal RNA large subunit methyltransferase H from Staphylococcus aureus (strain Mu3 / ATCC 700698).